The chain runs to 461 residues: Photosystem II CP43 reaction center protein (461 aa).

Positions 1–2 are excised as a propeptide; sequence ME. Position 3 is an N-acetylthreonine (Thr-3). Thr-3 carries the phosphothreonine modification. The next 5 membrane-spanning stretches (helical) occupy residues 57 to 81, 122 to 143, 166 to 188, 243 to 263, and 279 to 300; these read LFEV…PHIA, LIGP…KDKN, KAMY…RVIT, TPWP…LSYS, and WFNN…ASQS. Glu-355 contributes to the [CaMn4O5] cluster binding site. Residues 435–459 form a helical membrane-spanning segment; it reads RARAAAAGFEKGIDRFDEPVLSMRP.

Belongs to the PsbB/PsbC family. PsbC subfamily. In terms of assembly, PSII is composed of 1 copy each of membrane proteins PsbA, PsbB, PsbC, PsbD, PsbE, PsbF, PsbH, PsbI, PsbJ, PsbK, PsbL, PsbM, PsbT, PsbX, PsbY, PsbZ, Psb30/Ycf12, at least 3 peripheral proteins of the oxygen-evolving complex and a large number of cofactors. It forms dimeric complexes. Binds multiple chlorophylls and provides some of the ligands for the Ca-4Mn-5O cluster of the oxygen-evolving complex. It may also provide a ligand for a Cl- that is required for oxygen evolution. PSII binds additional chlorophylls, carotenoids and specific lipids. is required as a cofactor. Post-translationally, phosphorylated in vitro.

The protein localises to the plastid. The protein resides in the chloroplast thylakoid membrane. Its function is as follows. One of the components of the core complex of photosystem II (PSII). It binds chlorophyll and helps catalyze the primary light-induced photochemical processes of PSII. PSII is a light-driven water:plastoquinone oxidoreductase, using light energy to abstract electrons from H(2)O, generating O(2) and a proton gradient subsequently used for ATP formation. This is Photosystem II CP43 reaction center protein from Chlamydomonas reinhardtii (Chlamydomonas smithii).